The primary structure comprises 144 residues: Putative pre-16S rRNA nuclease (144 aa).

Belongs to the YqgF nuclease family.

It localises to the cytoplasm. Functionally, could be a nuclease involved in processing of the 5'-end of pre-16S rRNA. This is Putative pre-16S rRNA nuclease from Mycoplasma mobile (strain ATCC 43663 / 163K / NCTC 11711) (Mesomycoplasma mobile).